Consider the following 343-residue polypeptide: tRNA N6-adenosine threonylcarbamoyltransferase (343 aa).

H120 and H124 together coordinate Fe cation. Substrate contacts are provided by residues 142–146, D175, G188, D192, and N281; that span reads VVSGG. Position 310 (D310) interacts with Fe cation.

It belongs to the KAE1 / TsaD family. The cofactor is Fe(2+).

It is found in the cytoplasm. The catalysed reaction is L-threonylcarbamoyladenylate + adenosine(37) in tRNA = N(6)-L-threonylcarbamoyladenosine(37) in tRNA + AMP + H(+). In terms of biological role, required for the formation of a threonylcarbamoyl group on adenosine at position 37 (t(6)A37) in tRNAs that read codons beginning with adenine. Is involved in the transfer of the threonylcarbamoyl moiety of threonylcarbamoyl-AMP (TC-AMP) to the N6 group of A37, together with TsaE and TsaB. TsaD likely plays a direct catalytic role in this reaction. This Bacillus thuringiensis (strain Al Hakam) protein is tRNA N6-adenosine threonylcarbamoyltransferase.